Reading from the N-terminus, the 88-residue chain is Sec-independent protein translocase protein TatA (88 aa).

A helical transmembrane segment spans residues 1–21; it reads MGGASIWHWIVVGVIVMLLFG. Residues 62 to 88 are disordered; it reads TEPVRTLPPHPTEPAPATHATVDRKVV.

This sequence belongs to the TatA/E family. As to quaternary structure, the Tat system comprises two distinct complexes: a TatABC complex, containing multiple copies of TatA, TatB and TatC subunits, and a separate TatA complex, containing only TatA subunits. Substrates initially bind to the TatABC complex, which probably triggers association of the separate TatA complex to form the active translocon.

Its subcellular location is the cell inner membrane. Its function is as follows. Part of the twin-arginine translocation (Tat) system that transports large folded proteins containing a characteristic twin-arginine motif in their signal peptide across membranes. TatA could form the protein-conducting channel of the Tat system. The sequence is that of Sec-independent protein translocase protein TatA from Methylobacterium sp. (strain 4-46).